We begin with the raw amino-acid sequence, 275 residues long: uncharacterized protein (275 aa).

Asp-45 serves as a coordination point for NADPH. Catalysis depends on proton donor residues Tyr-50 and His-111. The NADPH site is built by Ser-139, Gln-162, Leu-191, Lys-196, Ser-232, Ser-233, and Arg-237.

This sequence belongs to the aldo/keto reductase family.

Its subcellular location is the cytoplasm. The protein resides in the nucleus. This is an uncharacterized protein from Schizosaccharomyces pombe (strain 972 / ATCC 24843) (Fission yeast).